We begin with the raw amino-acid sequence, 291 residues long: Protein ZAR1-like (291 aa).

Residues 103-152 (GSQTLHSSSLSDRTSSRKPTEAWEVGRRALIRRPQDGEDEESQEELTGPT) are disordered. Residues 106 to 115 (TLHSSSLSDR) are compositionally biased toward low complexity. The segment covering 116 to 129 (TSSRKPTEAWEVGR) has biased composition (basic and acidic residues). The segment at 195 to 280 (LKYGYFHCKD…QELCGHCKDK (86 aa)) adopts a 3CxxC-type zinc-finger fold.

The protein belongs to the ZAR1 family. As to quaternary structure, interacts with YBX2. In terms of tissue distribution, expressed in oocytes and zygotes. Predominantly expressed in maturing oocytes before maternal-to-zygotic transition (MZT). Less abundant than Zar1.

It localises to the cytoplasm. It is found in the cytoplasmic ribonucleoprotein granule. MRNA-binding protein required for maternal mRNA storage, translation and degradation during oocyte maturation. Probably promotes formation of some phase-separated membraneless compartment that stores maternal mRNAs in oocytes: acts by undergoing liquid-liquid phase separation upon binding to maternal mRNAs. Binds to the 3'-UTR of maternal mRNAs, inhibiting their translation. The chain is Protein ZAR1-like from Mus musculus (Mouse).